Reading from the N-terminus, the 307-residue chain is Aspartate carbamoyltransferase catalytic subunit (307 aa).

2 residues coordinate carbamoyl phosphate: arginine 54 and threonine 55. Lysine 83 contributes to the L-aspartate binding site. Arginine 104, histidine 132, and glutamine 135 together coordinate carbamoyl phosphate. Residues arginine 165 and arginine 228 each coordinate L-aspartate. Carbamoyl phosphate-binding residues include leucine 267 and proline 268.

The protein belongs to the aspartate/ornithine carbamoyltransferase superfamily. ATCase family. Heterododecamer (2C3:3R2) of six catalytic PyrB chains organized as two trimers (C3), and six regulatory PyrI chains organized as three dimers (R2).

It carries out the reaction carbamoyl phosphate + L-aspartate = N-carbamoyl-L-aspartate + phosphate + H(+). It participates in pyrimidine metabolism; UMP biosynthesis via de novo pathway; (S)-dihydroorotate from bicarbonate: step 2/3. In terms of biological role, catalyzes the condensation of carbamoyl phosphate and aspartate to form carbamoyl aspartate and inorganic phosphate, the committed step in the de novo pyrimidine nucleotide biosynthesis pathway. The sequence is that of Aspartate carbamoyltransferase catalytic subunit from Clostridium botulinum (strain Loch Maree / Type A3).